The sequence spans 479 residues: Zinc metalloproteinase/disintegrin PMMP-1 (479 aa).

A signal peptide spans 1-20 (MIQVLLVTICLAVFPYQGSS). The propeptide occupies 21-188 (IILESGNVND…PIKKASKLVV (168 aa)). Residues 194-390 (RYVELVIVAD…HNPQCILNKP (197 aa)) form the Peptidase M12B domain. 3 disulfides stabilise this stretch: Cys305–Cys385, Cys345–Cys369, and Cys347–Cys352. His330 lines the Zn(2+) pocket. Glu331 is an active-site residue. The Zn(2+) site is built by His334 and His339. Asn368 carries N-linked (GlcNAc...) asparagine glycosylation. Residues 391–408 (LRTDTVSTPVSGNELLEA) constitute a propeptide that is removed on maturation. In terms of domain architecture, Disintegrin spans 398–479 (TPVSGNELLE…ADCPRNGLYG (82 aa)). Disulfide bonds link Cys412–Cys427, Cys414–Cys422, Cys421–Cys444, Cys435–Cys441, Cys440–Cys465, and Cys453–Cys472. Residues 457–459 (RGD) carry the Cell attachment site motif.

It belongs to the venom metalloproteinase (M12B) family. P-II subfamily. P-IIa sub-subfamily. As to quaternary structure, monomer. Requires Zn(2+) as cofactor. Expressed by the venom gland.

The protein localises to the secreted. Functionally, impairs hemostasis in the envenomed animal. Its function is as follows. Inhibits platelet aggregation. In Protobothrops mucrosquamatus (Taiwan habu), this protein is Zinc metalloproteinase/disintegrin PMMP-1.